The chain runs to 256 residues: Imidazole glycerol phosphate synthase subunit HisF (256 aa).

Residues Asp13 and Asp132 contribute to the active site.

Belongs to the HisA/HisF family. In terms of assembly, heterodimer of HisH and HisF.

Its subcellular location is the cytoplasm. It catalyses the reaction 5-[(5-phospho-1-deoxy-D-ribulos-1-ylimino)methylamino]-1-(5-phospho-beta-D-ribosyl)imidazole-4-carboxamide + L-glutamine = D-erythro-1-(imidazol-4-yl)glycerol 3-phosphate + 5-amino-1-(5-phospho-beta-D-ribosyl)imidazole-4-carboxamide + L-glutamate + H(+). It participates in amino-acid biosynthesis; L-histidine biosynthesis; L-histidine from 5-phospho-alpha-D-ribose 1-diphosphate: step 5/9. Functionally, IGPS catalyzes the conversion of PRFAR and glutamine to IGP, AICAR and glutamate. The HisF subunit catalyzes the cyclization activity that produces IGP and AICAR from PRFAR using the ammonia provided by the HisH subunit. The polypeptide is Imidazole glycerol phosphate synthase subunit HisF (Leptospira borgpetersenii serovar Hardjo-bovis (strain JB197)).